Reading from the N-terminus, the 301-residue chain is tRNA dimethylallyltransferase 1 (301 aa).

Residue 11-18 (GPTGVGKT) coordinates ATP. 13 to 18 (TGVGKT) serves as a coordination point for substrate. Positions 36–39 (DSRQ) are interaction with substrate tRNA.

It belongs to the IPP transferase family. As to quaternary structure, monomer. Requires Mg(2+) as cofactor.

It catalyses the reaction adenosine(37) in tRNA + dimethylallyl diphosphate = N(6)-dimethylallyladenosine(37) in tRNA + diphosphate. Functionally, catalyzes the transfer of a dimethylallyl group onto the adenine at position 37 in tRNAs that read codons beginning with uridine, leading to the formation of N6-(dimethylallyl)adenosine (i(6)A). This is tRNA dimethylallyltransferase 1 from Bacteroides fragilis (strain YCH46).